A 136-amino-acid chain; its full sequence is Aspartate 1-decarboxylase (136 aa).

Catalysis depends on Ser25, which acts as the Schiff-base intermediate with substrate; via pyruvic acid. Pyruvic acid (Ser) is present on Ser25. Thr57 is a binding site for substrate. Tyr58 (proton donor) is an active-site residue. 73–75 (GAA) contributes to the substrate binding site.

Belongs to the PanD family. As to quaternary structure, heterooctamer of four alpha and four beta subunits. Pyruvate is required as a cofactor. Post-translationally, is synthesized initially as an inactive proenzyme, which is activated by self-cleavage at a specific serine bond to produce a beta-subunit with a hydroxyl group at its C-terminus and an alpha-subunit with a pyruvoyl group at its N-terminus.

The protein resides in the cytoplasm. It carries out the reaction L-aspartate + H(+) = beta-alanine + CO2. It participates in cofactor biosynthesis; (R)-pantothenate biosynthesis; beta-alanine from L-aspartate: step 1/1. Functionally, catalyzes the pyruvoyl-dependent decarboxylation of aspartate to produce beta-alanine. This Acidothermus cellulolyticus (strain ATCC 43068 / DSM 8971 / 11B) protein is Aspartate 1-decarboxylase.